Reading from the N-terminus, the 658-residue chain is ATP-dependent zinc metalloprotease FtsH 4 (658 aa).

A disordered region spans residues 1–22 (MREPTNRQGSPGPGEPRPPAQG). The Cytoplasmic portion of the chain corresponds to 1 to 28 (MREPTNRQGSPGPGEPRPPAQGRPRFPT). The helical transmembrane segment at 29-49 (WILWVALLALALWNVYTFFWP) threads the bilayer. Topologically, residues 50–149 (SSGARLNIPY…TVKIDQAGGS (100 aa)) are extracellular. The tract at residues 95–114 (QVLSPGDPVPPGTSPNEIRT) is disordered. The chain crosses the membrane as a helical span at residues 150–170 (VWPSLLATIVPLFLFIGLMVY). Topologically, residues 171–658 (LGRSMSRGQQ…AAPAAAADSV (488 aa)) are cytoplasmic. 243-250 (GPPGTGKT) contributes to the ATP binding site. Zn(2+) is bound at residue His464. Residue Glu465 is part of the active site. Zn(2+) is bound by residues His468 and Asp540.

It in the central section; belongs to the AAA ATPase family. In the C-terminal section; belongs to the peptidase M41 family. Homohexamer. It depends on Zn(2+) as a cofactor.

It localises to the cell membrane. In terms of biological role, acts as a processive, ATP-dependent zinc metallopeptidase for both cytoplasmic and membrane proteins. Plays a role in the quality control of integral membrane proteins. The sequence is that of ATP-dependent zinc metalloprotease FtsH 4 (ftsh4) from Sphaerobacter thermophilus (strain ATCC 49802 / DSM 20745 / KCCM 41009 / NCIMB 13125 / S 6022).